The primary structure comprises 153 residues: uncharacterized protein (153 aa).

Belongs to the RusA family.

This is an uncharacterized protein from Xylella fastidiosa (strain Temecula1 / ATCC 700964).